A 422-amino-acid polypeptide reads, in one-letter code: Zinc finger protein Gfi-1 (422 aa).

Residues 1 to 20 form an SNAG domain region; sequence MPRSFLVKSKKAHSYHQPRS. Positions 1–109 are disordered; sequence MPRSFLVKSK…ASEKSMCPSL (109 aa). Phosphoserine is present on residues serine 20 and serine 56. The required for interaction with RELA stretch occupies residues 140 to 257; that stretch reads RPCGALERGA…LLLGGGSYKC (118 aa). 6 C2H2-type zinc fingers span residues 255–278, 284–306, 312–334, 340–362, 368–390, and 396–419; these read YKCIKCSKVFSTPHGLEVHVRRSH, FACEMCGKTFGHAVSLEQHKAVH, FDCKICGKSFKRSSTLSTHLLIH, YPCQYCGKRFHQKSDMKKHTFIH, HKCQVCGKAFSQSSNLITHSRKH, and FGCDLCGKGFQRKVDLRRHRETQH.

Interacts with U2AF1L4. Component of RCOR-GFI-KDM1A-HDAC complexes. Interacts directly with RCOR1, KDM1A and HDAC2. Also interacts with HDAC1. Interacts (via the zinc-finger domain) with ARIH2; the interaction prevents GFI1 ubiquitination and proteasomal degradation. Interacts with PIAS3; the interaction relieves the inhibitory effect of PIAS3 on STAT3-mediated transcriptional activity. Forms a complex with EHMT2 and HDAC1 to promote 'Lys-9' dimethylation of H3 (H3K9Me2) and repress expression of target genes. Interacts directly with EHMT2. Component of the GFI1-AJUBA-HDAC1 repressor complex. Interacts directly with AJUBA (via ITS LIM domains); the interaction results in the HDAC-dependent corepression of a subset of GFI1 target genes and, occurs independently of the SNAG domain. Interacts with SPI1; the interaction inhibits SPI1 transcriptional activity targeted at macrophage-specific genes, repressing macrophage differentiation of myeloid progenitor cells and promoting granulocyte commitment. Interacts with RUNX1T1; the interaction represses HDAC-mediated transcriptional activity. Interacts with RELA; the interaction occurs on liposaccharide (LPS) stimulation and controls RELA DNA binding activity and regulates endotoxin-mediated TOLL-like receptor inflammatory response. Interacts (via the C-terminal zinc fingers) with ZBTB17; the interaction results in the recruitment of GFI1 to the CDKN1A/p21 and CDKN1B promoters and repression of transcription. Ubiquitinated. Ubiquitination and degradation by the proteasome is inhibited by the ubiquitin ligase, ARIH2.

It is found in the nucleus. Functionally, transcription repressor essential for hematopoiesis. Functions in a cell-context and development-specific manner. Binds to 5'-TAAATCAC[AT]GCA-3' in the promoter region of a large number of genes. Component of several complexes, including the EHMT2-GFI1-HDAC1, AJUBA-GFI1-HDAC1 and RCOR-GFI-KDM1A-HDAC complexes, that suppress, via histone deacetylase (HDAC) recruitment, a number of genes implicated in multilineage blood cell development. Regulates neutrophil differentiation, promotes proliferation of lymphoid cells, and is required for granulocyte development. Inhibits SPI1 transcriptional activity at macrophage-specific genes, repressing macrophage differentiation of myeloid progenitor cells and promoting granulocyte commitment. Mediates, together with U2AF1L4, the alternative splicing of CD45 and controls T-cell receptor signaling. Regulates the endotoxin-mediated Toll-like receptor (TLR) inflammatory response by antagonizing RELA. Cooperates with CBFA2T2 to regulate ITGB1-dependent neurite growth. Controls cell-cycle progression by repressing CDKNIA/p21 transcription in response to TGFB1 via recruitment of GFI1 by ZBTB17 to the CDKNIA/p21 and CDKNIB promoters. Required for the maintenance of inner ear hair cells. In addition to its role in transcription, acts as a substrate adapter for PRMT1 in the DNA damage response: facilitates the recognition of TP53BP1 and MRE11 substrates by PRMT1, promoting their methylation and the DNA damage response. This Homo sapiens (Human) protein is Zinc finger protein Gfi-1 (GFI1).